The following is a 428-amino-acid chain: Aspartate--tRNA(Asp) ligase (428 aa).

E166 provides a ligand contact to L-aspartate. The aspartate stretch occupies residues Q188 to K191. Residue R210 coordinates L-aspartate. ATP-binding positions include R210–E212, R218–L220, and E351. Positions 351 and 354 each coordinate Mg(2+). 2 residues coordinate L-aspartate: S354 and R358. ATP is bound at residue G399–R402.

The protein belongs to the class-II aminoacyl-tRNA synthetase family. Type 2 subfamily. As to quaternary structure, homodimer. The cofactor is Mg(2+).

The protein localises to the cytoplasm. The enzyme catalyses tRNA(Asp) + L-aspartate + ATP = L-aspartyl-tRNA(Asp) + AMP + diphosphate. Catalyzes the attachment of L-aspartate to tRNA(Asp) in a two-step reaction: L-aspartate is first activated by ATP to form Asp-AMP and then transferred to the acceptor end of tRNA(Asp). The sequence is that of Aspartate--tRNA(Asp) ligase from Thermoplasma volcanium (strain ATCC 51530 / DSM 4299 / JCM 9571 / NBRC 15438 / GSS1).